Here is a 245-residue protein sequence, read N- to C-terminus: Acetylglutamate kinase (245 aa).

Residues 41–42 (GG), R63, and N156 each bind substrate.

Belongs to the acetylglutamate kinase family. ArgB subfamily.

Its subcellular location is the cytoplasm. It catalyses the reaction N-acetyl-L-glutamate + ATP = N-acetyl-L-glutamyl 5-phosphate + ADP. The protein operates within amino-acid biosynthesis; L-arginine biosynthesis; N(2)-acetyl-L-ornithine from L-glutamate: step 2/4. In terms of biological role, catalyzes the ATP-dependent phosphorylation of N-acetyl-L-glutamate. The chain is Acetylglutamate kinase from Streptococcus gordonii (strain Challis / ATCC 35105 / BCRC 15272 / CH1 / DL1 / V288).